A 347-amino-acid polypeptide reads, in one-letter code: DNA-directed RNA polymerase subunit alpha (347 aa).

Residues 1–243 are alpha N-terminal domain (alpha-NTD); that stretch reads MLFREGTRLI…DQISVFINFD (243 aa). Residues 255–347 are alpha C-terminal domain (alpha-CTD); the sequence is SGSSDLNDNL…EWKRKQHHEA (93 aa).

It belongs to the RNA polymerase alpha chain family. Homodimer. The RNAP catalytic core consists of 2 alpha, 1 beta, 1 beta' and 1 omega subunit. When a sigma factor is associated with the core the holoenzyme is formed, which can initiate transcription.

The enzyme catalyses RNA(n) + a ribonucleoside 5'-triphosphate = RNA(n+1) + diphosphate. Functionally, DNA-dependent RNA polymerase catalyzes the transcription of DNA into RNA using the four ribonucleoside triphosphates as substrates. In Lawsonia intracellularis (strain PHE/MN1-00), this protein is DNA-directed RNA polymerase subunit alpha.